Consider the following 332-residue polypeptide: Biotin synthase (332 aa).

Residues 53 to 282 (HFGKKVKLNM…TKEIRISGGR (230 aa)) enclose the Radical SAM core domain. Cys-71, Cys-75, and Cys-78 together coordinate [4Fe-4S] cluster. [2Fe-2S] cluster contacts are provided by Cys-115, Cys-147, Cys-207, and Arg-277.

The protein belongs to the radical SAM superfamily. Biotin synthase family. In terms of assembly, homodimer. [4Fe-4S] cluster serves as cofactor. [2Fe-2S] cluster is required as a cofactor.

The enzyme catalyses (4R,5S)-dethiobiotin + (sulfur carrier)-SH + 2 reduced [2Fe-2S]-[ferredoxin] + 2 S-adenosyl-L-methionine = (sulfur carrier)-H + biotin + 2 5'-deoxyadenosine + 2 L-methionine + 2 oxidized [2Fe-2S]-[ferredoxin]. The protein operates within cofactor biosynthesis; biotin biosynthesis; biotin from 7,8-diaminononanoate: step 2/2. Its function is as follows. Catalyzes the conversion of dethiobiotin (DTB) to biotin by the insertion of a sulfur atom into dethiobiotin via a radical-based mechanism. In Bacillus mycoides (strain KBAB4) (Bacillus weihenstephanensis), this protein is Biotin synthase.